The chain runs to 66 residues: UPF0337 protein bsl1473 (66 aa).

The protein belongs to the UPF0337 (CsbD) family.

The polypeptide is UPF0337 protein bsl1473 (Bradyrhizobium diazoefficiens (strain JCM 10833 / BCRC 13528 / IAM 13628 / NBRC 14792 / USDA 110)).